Reading from the N-terminus, the 105-residue chain is UPF0145 protein AHA_2580 (105 aa).

It belongs to the UPF0145 family.

The protein is UPF0145 protein AHA_2580 of Aeromonas hydrophila subsp. hydrophila (strain ATCC 7966 / DSM 30187 / BCRC 13018 / CCUG 14551 / JCM 1027 / KCTC 2358 / NCIMB 9240 / NCTC 8049).